Here is a 79-residue protein sequence, read N- to C-terminus: uncharacterized protein (79 aa).

This is an uncharacterized protein from Saccharomyces cerevisiae (strain ATCC 204508 / S288c) (Baker's yeast).